The sequence spans 219 residues: Inner membrane protein YghB (219 aa).

Residues methionine 1–alanine 17 are Cytoplasmic-facing. Residues alanine 18–leucine 38 traverse the membrane as a helical segment. Residues glutamate 39–aspartate 67 lie on the Periplasmic side of the membrane. Residues phenylalanine 68 to isoleucine 88 form a helical membrane-spanning segment. At glutamine 89–serine 160 the chain is on the cytoplasmic side. Residues glycine 161 to valine 181 form a helical membrane-spanning segment. Topologically, residues lysine 182–phenylalanine 191 are periplasmic. The helical transmembrane segment at leucine 192–isoleucine 212 threads the bilayer. Topologically, residues lysine 213–alanine 219 are cytoplasmic.

The protein belongs to the DedA family.

The protein localises to the cell inner membrane. The polypeptide is Inner membrane protein YghB (yghB) (Escherichia coli O6:H1 (strain CFT073 / ATCC 700928 / UPEC)).